The chain runs to 759 residues: Putative ATP-dependent DNA helicase YjcD (759 aa).

The tract at residues 68 to 121 (ACEPKPSKEGKKEDDQESGVIRLPKGKAIAADPSPAVTEWHRPRSIKPGTPFVP) is disordered. A compositionally biased stretch (basic and acidic residues) spans 69–81 (CEPKPSKEGKKED). One can recognise a UvrD-like helicase ATP-binding domain in the interval 134 to 413 (VGLNTDQLKA…IYLTANYRST (280 aa)). ATP-binding positions include 158–163 (GSGKTR) and R411. The UvrD-like helicase C-terminal domain occupies 414 to 676 (HPIVSSADIV…QLMTIHRSKG (263 aa)).

This sequence belongs to the helicase family. UvrD subfamily.

It localises to the cytoplasm. The enzyme catalyses Couples ATP hydrolysis with the unwinding of duplex DNA by translocating in the 3'-5' direction.. It catalyses the reaction ATP + H2O = ADP + phosphate + H(+). May be involved in the generation of recombinogenic substrates for the subsequent action of RecA. The chain is Putative ATP-dependent DNA helicase YjcD (yjcD) from Bacillus subtilis (strain 168).